The primary structure comprises 313 residues: Porphobilinogen deaminase (313 aa).

At Cys-242 the chain carries S-(dipyrrolylmethanemethyl)cysteine.

This sequence belongs to the HMBS family. Monomer. The cofactor is dipyrromethane.

The enzyme catalyses 4 porphobilinogen + H2O = hydroxymethylbilane + 4 NH4(+). The protein operates within porphyrin-containing compound metabolism; protoporphyrin-IX biosynthesis; coproporphyrinogen-III from 5-aminolevulinate: step 2/4. Tetrapolymerization of the monopyrrole PBG into the hydroxymethylbilane pre-uroporphyrinogen in several discrete steps. The polypeptide is Porphobilinogen deaminase (Marinobacter nauticus (strain ATCC 700491 / DSM 11845 / VT8) (Marinobacter aquaeolei)).